We begin with the raw amino-acid sequence, 193 residues long: Thioredoxin reductase-like selenoprotein T1a (193 aa).

An N-terminal signal peptide occupies residues 1-21 (MRWLPFSALLLWALCLHSASA). Residues 44–47 (CVSU) constitute a cross-link (cysteinyl-selenocysteine (Cys-Sec)). Residue selenocysteine 47 is a non-standard amino acid, selenocysteine. Residues 83–101 (IASFLSMFKLLLIGVIILG) form a helical membrane-spanning segment.

This sequence belongs to the SelWTH family. Selenoprotein T subfamily. In terms of processing, may contain a selenide-sulfide bond between Cys-44 and Sec-47. This bond is speculated to serve as redox-active pair. Expressed in embryonic olfactory vesicles and the photoreceptor cell layer of the embryonic retina. Low level in embryonic epiphysis.

It is found in the endoplasmic reticulum membrane. It carries out the reaction [thioredoxin]-dithiol + NADP(+) = [thioredoxin]-disulfide + NADPH + H(+). In terms of biological role, selenoprotein with thioredoxin reductase-like oxidoreductase activity. This is Thioredoxin reductase-like selenoprotein T1a from Danio rerio (Zebrafish).